The sequence spans 202 residues: CASP-like protein 2B2 (202 aa).

Topologically, residues 1–29 (MSYLGVGVSPGNVPVYHGMNLKVIDRRVR) are cytoplasmic. A helical transmembrane segment spans residues 30-50 (LAELVLRCVICALGVLAAVLV). The Extracellular segment spans residues 51-72 (GTDTQVKEIFSIQKKARFTDMK). The helical transmembrane segment at 73 to 93 (ALVFLVVANGIAAAYSLVQGV) threads the bilayer. Residues 94–118 (RCVVGMVKGSVLFSKPLAWVIFSGD) are Cytoplasmic-facing. Residues 119-139 (QMMAYLTLSAVAAAVQSASFA) traverse the membrane as a helical segment. Residues 140-164 (KLGQPDLQWMKICNMYGKFCNQVGE) are Extracellular-facing. Residues 165–185 (GIASALLVSVSMVVLSCISSF) traverse the membrane as a helical segment. Topologically, residues 186–202 (SLFRLYGGNKGKDGARW) are cytoplasmic.

Belongs to the Casparian strip membrane proteins (CASP) family. Homodimer and heterodimers.

It is found in the cell membrane. This Populus trichocarpa (Western balsam poplar) protein is CASP-like protein 2B2.